Here is a 139-residue protein sequence, read N- to C-terminus: ATP synthase epsilon chain (139 aa).

Belongs to the ATPase epsilon chain family. As to quaternary structure, F-type ATPases have 2 components, CF(1) - the catalytic core - and CF(0) - the membrane proton channel. CF(1) has five subunits: alpha(3), beta(3), gamma(1), delta(1), epsilon(1). CF(0) has three main subunits: a, b and c.

It localises to the cell inner membrane. Its function is as follows. Produces ATP from ADP in the presence of a proton gradient across the membrane. The chain is ATP synthase epsilon chain from Marinomonas sp. (strain MWYL1).